The following is a 99-amino-acid chain: Bacterial microcompartment protein homohexamer (99 aa).

The BMC domain maps to 4-88 (ALGMIEVRGF…PHVNVDAALP (85 aa)).

Belongs to the bacterial microcompartments protein family. In terms of assembly, homohexamer with a small central pore. When purified protein is examined by atomic force microscopy it dynamically makes uniform patches about 35 Angstroms thick with hexamers in the same orientation. In the BMC the concave side faces outward, with the N- and C-terminii exposed to the cytoplasm.

It localises to the bacterial microcompartment. In terms of biological role, the only hexameric shell protein in this bacterium, it forms the majority of the bacterial microcompartment (BMC) shell. Expression of 5 proteins in E.coli (BMC-H (Hoch_5815), BMC-P (Hoch_5814), and 3 BMC-T (Hoch_5812, Hoch_5816, Hoch_3341)) forms a 40 nm artificial BMC with a molecular mass of 6.5 MDa. There are 60 BMC-H hexamers per BMC. The shell facets are 20-30 Angstroms thick (a single hexamer layer), with 1 of BMC-T trimers protruding to the exterior. The sequence is that of Bacterial microcompartment protein homohexamer from Haliangium ochraceum (strain DSM 14365 / JCM 11303 / SMP-2).